The following is a 319-amino-acid chain: Aliphatic sulfonates import ATP-binding protein SsuB 1 (319 aa).

In terms of domain architecture, ABC transporter spans 63–282 (VTLSGVSKRF…ARASAAFAAL (220 aa)). Residue 95–102 (GRSGCGKS) participates in ATP binding.

The protein belongs to the ABC transporter superfamily. Aliphatic sulfonates importer (TC 3.A.1.17.2) family. In terms of assembly, the complex is composed of two ATP-binding proteins (SsuB), two transmembrane proteins (SsuC) and a solute-binding protein (SsuA).

It is found in the cell inner membrane. The enzyme catalyses ATP + H2O + aliphatic sulfonate-[sulfonate-binding protein]Side 1 = ADP + phosphate + aliphatic sulfonateSide 2 + [sulfonate-binding protein]Side 1.. Part of the ABC transporter complex SsuABC involved in aliphatic sulfonates import. Responsible for energy coupling to the transport system. The chain is Aliphatic sulfonates import ATP-binding protein SsuB 1 from Burkholderia cenocepacia (strain HI2424).